The chain runs to 194 residues: MHNLIPTVIENTGNYERVFDIYSRLLRERIIFLSGEINDPKADTVIAQLLFLESEDSSKDIYLYLNSPGGSITAGLAIYDTMQYIKPDVRTICIGQAASMGAFLLAGGAKGKRESLTYSRIMIHQPWGGISGQASDINIQANEILRLKKLIIDIMSNQIGVDKEKLALDMERDYFMTSSDALKYGLIDSILVRE.

Catalysis depends on serine 99, which acts as the Nucleophile. Histidine 124 is a catalytic residue.

The protein belongs to the peptidase S14 family. Fourteen ClpP subunits assemble into 2 heptameric rings which stack back to back to give a disk-like structure with a central cavity, resembling the structure of eukaryotic proteasomes.

It localises to the cytoplasm. It carries out the reaction Hydrolysis of proteins to small peptides in the presence of ATP and magnesium. alpha-casein is the usual test substrate. In the absence of ATP, only oligopeptides shorter than five residues are hydrolyzed (such as succinyl-Leu-Tyr-|-NHMec, and Leu-Tyr-Leu-|-Tyr-Trp, in which cleavage of the -Tyr-|-Leu- and -Tyr-|-Trp bonds also occurs).. Its function is as follows. Cleaves peptides in various proteins in a process that requires ATP hydrolysis. Has a chymotrypsin-like activity. Plays a major role in the degradation of misfolded proteins. In Borreliella burgdorferi (strain ATCC 35210 / DSM 4680 / CIP 102532 / B31) (Borrelia burgdorferi), this protein is ATP-dependent Clp protease proteolytic subunit 1.